Consider the following 456-residue polypeptide: Alcohol acyltransferase 1 (456 aa).

Catalysis depends on proton acceptor residues H166 and D382.

This sequence belongs to the plant acyltransferase family.

Involved in the biosynthesis of volatile esters which confer kiwifruit flavor. Alcohol acyl transferase that can use a wide range of alcohols as substrate to produce esters. This Actinidia chinensis var. chinensis (Chinese soft-hair kiwi) protein is Alcohol acyltransferase 1.